Here is a 217-residue protein sequence, read N- to C-terminus: Probable transaldolase (217 aa).

Catalysis depends on Lys-83, which acts as the Schiff-base intermediate with substrate.

The protein belongs to the transaldolase family. Type 3B subfamily.

Its subcellular location is the cytoplasm. It catalyses the reaction D-sedoheptulose 7-phosphate + D-glyceraldehyde 3-phosphate = D-erythrose 4-phosphate + beta-D-fructose 6-phosphate. It participates in carbohydrate degradation; pentose phosphate pathway; D-glyceraldehyde 3-phosphate and beta-D-fructose 6-phosphate from D-ribose 5-phosphate and D-xylulose 5-phosphate (non-oxidative stage): step 2/3. In terms of biological role, transaldolase is important for the balance of metabolites in the pentose-phosphate pathway. The chain is Probable transaldolase from Clostridium botulinum (strain Okra / Type B1).